A 272-amino-acid polypeptide reads, in one-letter code: Magnetosome protein MamQ (272 aa).

The Cytoplasmic portion of the chain corresponds to 1–46; the sequence is MAVSDADASSVDKVESITLQRVKQSEELLAQLYVVEESPRRMGRGP. Residues 47-67 traverse the membrane as a helical segment; that stretch reads VQLMLAISVLSLVAFITTLLM. The Lumenal portion of the chain corresponds to 68–272; that stretch reads RYNAFVTMYE…PLTHSQESKN (205 aa).

This sequence belongs to the LemA family.

It localises to the magnetosome membrane. The protein localises to the cell inner membrane. Essential for magnetosome formation. Not essential for formation of magnetosome membrane vesicles. One of 7 genes (mamLQBIEMO) able to induce magnetosome membrane biogenesis; coexpression of mamLQRBIEMO in a deletion of the 17 gene mamAB operon restores magnetosome vesicle formation but not magnetite biosynthesis. The polypeptide is Magnetosome protein MamQ (Magnetospirillum gryphiswaldense (strain DSM 6361 / JCM 21280 / NBRC 15271 / MSR-1)).